Here is a 683-residue protein sequence, read N- to C-terminus: Acetyl-coenzyme A synthetase 2 (683 aa).

Residues 206 to 209 and threonine 325 each bind CoA; that span reads RGGK. ATP-binding positions include 401-403 and 425-430; these read GEP and DTMWQT. Position 425 to 430 (425 to 430) interacts with AMP; it reads DTMWQT. A Glycyl lysine isopeptide (Lys-Gly) (interchain with G-Cter in ubiquitin) cross-link involves residue lysine 506. 2 residues coordinate ATP: aspartate 516 and arginine 531. 2 residues coordinate AMP: aspartate 516 and arginine 531. Serine 539 serves as a coordination point for CoA. Arginine 542 is an ATP binding site. Arginine 612 contacts CoA. The residue at position 679 (serine 679) is a Phosphoserine.

This sequence belongs to the ATP-dependent AMP-binding enzyme family.

It localises to the cytoplasm. Its subcellular location is the nucleus. The catalysed reaction is acetate + ATP + CoA = acetyl-CoA + AMP + diphosphate. Its pathway is carbohydrate metabolism; pyruvate metabolism. Its function is as follows. Catalyzes the production of acetyl-CoA. Provides the acetyl-CoA source for histone acetylation in the nucleus. 'Anaerobic' isozyme of acetyl-coenzyme A synthetase, which is required for growth on fermentable carbon sources such as glucose. May be involved in the PDH (pyruvate dehydrogenase complex) bypass. The protein is Acetyl-coenzyme A synthetase 2 of Saccharomyces cerevisiae (strain ATCC 204508 / S288c) (Baker's yeast).